Here is a 546-residue protein sequence, read N- to C-terminus: Probable malate:quinone oxidoreductase (546 aa).

Belongs to the MQO family. FAD serves as cofactor.

The catalysed reaction is (S)-malate + a quinone = a quinol + oxaloacetate. It functions in the pathway carbohydrate metabolism; tricarboxylic acid cycle; oxaloacetate from (S)-malate (quinone route): step 1/1. The protein is Probable malate:quinone oxidoreductase of Acinetobacter baumannii (strain AB0057).